We begin with the raw amino-acid sequence, 307 residues long: Ribosomal RNA small subunit methyltransferase H (307 aa).

S-adenosyl-L-methionine contacts are provided by residues Gly-33–His-35, Asp-52, Leu-83, Asp-97, and Gln-104.

It belongs to the methyltransferase superfamily. RsmH family.

The protein resides in the cytoplasm. It carries out the reaction cytidine(1402) in 16S rRNA + S-adenosyl-L-methionine = N(4)-methylcytidine(1402) in 16S rRNA + S-adenosyl-L-homocysteine + H(+). Specifically methylates the N4 position of cytidine in position 1402 (C1402) of 16S rRNA. The sequence is that of Ribosomal RNA small subunit methyltransferase H from Campylobacter fetus subsp. fetus (strain 82-40).